A 431-amino-acid polypeptide reads, in one-letter code: MSDAAPSLSNLFYDPTYNPGQSTINYTSIYGNGSTITFDELQGLVNSTVTQAIMFGVRCGAAALTLIVMWMTSRSRKTPIFIINQVSLFLIILHSALYFKYLLSNYSSVTYALTGFPQFISRGDVHVYGATNIIQVLLVASIETSLVFQIKVIFTGDNFKRIGLMLTSISFTLGIATVTMYFVSAVKGMIVTYNDVSATQDKYFNASTILLASSINFMSFVLVVKLILAIRSRRFLGLKQFDSFHILLIMSCQSLLVPSIIFILAYSLKPNQGTDVLTTVATLLAVLSLPLSSMWATAANNASKTNTITSDFTTSTDRFYPGTLSSFQTDSINNDAKSSLRSRLYDLYPRRKETTSDKHSERTFVSETADDIEKNQFYQLPTPTSSKNTRIGPFADASYKEGEVEPVDMYTPDTAADEEARKFWTEDNNNL.

The Extracellular portion of the chain corresponds to 1 to 49 (MSDAAPSLSNLFYDPTYNPGQSTINYTSIYGNGSTITFDELQGLVNSTV). N-linked (GlcNAc...) asparagine glycans are attached at residues Asn-25 and Asn-32. The helical transmembrane segment at 50-72 (TQAIMFGVRCGAAALTLIVMWMT) threads the bilayer. The Glycine zipper motif signature appears at 53 to 61 (IMFGVRCGA). Residues 73-78 (SRSRKT) lie on the Cytoplasmic side of the membrane. Residues 79 to 102 (PIFIINQVSLFLIILHSALYFKYL) traverse the membrane as a helical segment. Residues 103-132 (LSNYSSVTYALTGFPQFISRGDVHVYGATN) lie on the Extracellular side of the membrane. A helical transmembrane segment spans residues 133–156 (IIQVLLVASIETSLVFQIKVIFTG). The Cytoplasmic portion of the chain corresponds to 157–163 (DNFKRIG). A helical transmembrane segment spans residues 164-188 (LMLTSISFTLGIATVTMYFVSAVKG). Over 189-205 (MIVTYNDVSATQDKYFN) the chain is Extracellular. Residues 206–230 (ASTILLASSINFMSFVLVVKLILAI) form a helical membrane-spanning segment. Residues 231 to 241 (RSRRFLGLKQF) lie on the Cytoplasmic side of the membrane. A helical transmembrane segment spans residues 242–266 (DSFHILLIMSCQSLLVPSIIFILAY). At 267–275 (SLKPNQGTD) the chain is on the extracellular side. A helical membrane pass occupies residues 276–299 (VLTTVATLLAVLSLPLSSMWATAA). Topologically, residues 300–431 (NNASKTNTIT…KFWTEDNNNL (132 aa)) are cytoplasmic. Phosphoserine occurs at positions 310 and 315. A Phosphothreonine modification is found at Thr-329. A Phosphoserine modification is found at Ser-331. Lys-337 participates in a covalent cross-link: Glycyl lysine isopeptide (Lys-Gly) (interchain with G-Cter in ubiquitin). A Phosphoserine modification is found at Ser-360. Residue Thr-363 is modified to Phosphothreonine. The residue at position 366 (Ser-366) is a Phosphoserine. A Glycyl lysine isopeptide (Lys-Gly) (interchain with G-Cter in ubiquitin) cross-link involves residue Lys-374. A compositionally biased stretch (polar residues) spans 379 to 389 (QLPTPTSSKNT). The disordered stretch occupies residues 379-406 (QLPTPTSSKNTRIGPFADASYKEGEVEP). Thr-382 is subject to Phosphothreonine. Residues Ser-385 and Ser-386 each carry the phosphoserine modification. Residue Lys-400 forms a Glycyl lysine isopeptide (Lys-Gly) (interchain with G-Cter in ubiquitin) linkage. Phosphothreonine occurs at positions 411 and 414. Lys-422 participates in a covalent cross-link: Glycyl lysine isopeptide (Lys-Gly) (interchain with G-Cter in ubiquitin).

The protein belongs to the G-protein coupled receptor 4 family. As to quaternary structure, homodimer. Might also for higher order homooligomers such as homotetramers. Oligomerization is mediated significantly by transmembrane domain 1 (TMD1), possibly in concert with the N-terminal extracellular domain and TMD2. Interaction with GPA1, its dedicated G-alpha protein. Undergoes hyperphosphorylation of the C-terminal cytoplasmic domain after binding of the alpha-factor, which leads to internalization by endocytosis. Post-translationally, monoubiquitination at Lys-337 triggers internalization of STE2. In terms of processing, N-glycosylated. N-glycosylation may be involved in the sorting process for misfolded STE2 protein. In terms of tissue distribution, expressed in MATa strains but not in MATalpha strains.

It localises to the cell membrane. Functionally, fungal class D1 G-protein-coupled receptor that acts as an alpha-factor pheromone receptor performing pheromone-dependent signal transduction involved in cellular conjugation, mating projection assembly, and in cell fusion. Following alpha-factor-binding, the signal is transmitted via a tripartite G protein consisting of alpha-, beta- and gamma-subunits (GAP1, STE4 and STE8 respectively) that prepares the cell for conjugation. In the inactive state, the cytoplasmic end of transmembrane domain 7 (TMD7) is unstructured and packs between TMD1-6, blocking the G protein coupling site. Agonist binding results in the outward movement of the extracellular ends of TMD6 and TMD7 by 6 Angstroms. On the intracellular surface, the G protein coupling site is formed by a 20 Angstroms outward movement of the unstructured region in TMD7 that unblocks the site, and a 12 Angstroms inward movement of TMD6. The sequence is that of Pheromone alpha factor receptor (STE2) from Saccharomyces cerevisiae (strain ATCC 204508 / S288c) (Baker's yeast).